The following is a 448-amino-acid chain: TRAF family member-associated NF-kappa-B activator (448 aa).

Positions 35–65 (MDKNIGEQLNRAYEAFRQACMDRDSAVRELQ) are necessary for interaction with ZC3H12A. A coiled-coil region spans residues 60–98 (AVRELQQKQTENYEQRIREQQEQLSFQQNLIDRLKSQLL). The necessary for interaction with TRAF6 stretch occupies residues 105–224 (DNSYGYVPLL…QCTDKTEKQE (120 aa)). Residues 166-205 (HERDNIEKTFWDLKEEFHRICLLAKAQKDHLSKLNIPDIA) form an interaction with TBK1 and IKBKE region. The TRAF family member interaction stretch occupies residues 205-224 (ATDTQCSVPIQCTDKTEKQE). Serine 211 carries the phosphoserine modification. Threonine 246 bears the Phosphothreonine mark. Serine 258, serine 261, serine 377, and serine 380 each carry phosphoserine. The UBZ1-type zinc finger occupies 416–443 (PLVCEFCQELFPPSITSRGDFLRHLNTH). Residues cysteine 419, cysteine 422, histidine 439, and histidine 443 each contribute to the Zn(2+) site.

In terms of assembly, homodimer. Found in a deubiquitination complex with TANK, USP10 and ZC3H12A; this complex inhibits genotoxic stress- or interleukin-1-beta-mediated NF-kappaB activation by promoting IKBKG or TRAF6 deubiquitination. Interacts with IKBKG; this interaction increases in response to DNA damage. Interacts with TRAF6; this interaction increases in response to DNA damage and recruits USP10 to the ubiquitinated TRAF6. Interacts with USP10; this interaction increases in response to DNA damage. Interacts with TBK1 and IKBKE. Also interacts with TRAF1, TRAF2, and TRAF3 by binding to their TRAF-C domains; the interaction with TRAF2 is disrupted by the phosphorylation of TANK by IKBKE. Interacts more strongly with TRAF1 and TRAF2 than TRAF3. Part of a ternary complex consisting of TANK, IKBKB and IKBKG. Interacts with IKBKG; the interaction is enhanced by IKBKE and TBK1. As to expression, heart, brain, spleen, lung, liver, skeletal muscle, kidney and testis.

The protein resides in the cytoplasm. Adapter protein involved in I-kappa-B-kinase (IKK) regulation which constitutively binds TBK1 and IKBKE playing a role in antiviral innate immunity. Acts as a regulator of TRAF function by maintaining them in a latent state. Blocks TRAF2 binding to LMP1 and inhibits LMP1-mediated NF-kappa-B activation. Negatively regulates NF-kappaB signaling and cell survival upon DNA damage. Plays a role as an adapter to assemble ZC3H12A, USP10 in a deubiquitination complex which plays a negative feedback response to attenuate NF-kappaB activation through the deubiquitination of IKBKG or TRAF6 in response to interleukin-1-beta (IL1B) stimulation or upon DNA damage. Promotes UBP10-induced deubiquitination of TRAF6 in response to DNA damage. May control negatively TRAF2-mediated NF-kappa-B activation signaled by CD40, TNFR1 and TNFR2. Essential for the efficient induction of IRF-dependent transcription following infection with Sendai virus. The sequence is that of TRAF family member-associated NF-kappa-B activator (Tank) from Mus musculus (Mouse).